A 220-amino-acid chain; its full sequence is ATP synthase subunit 5, mitochondrial (220 aa).

Belongs to the ATPase delta chain family. As to quaternary structure, F-type ATPases have 2 components, CF(1) - the catalytic core - and CF(0) - the membrane proton channel. CF(1) has five subunits: alpha(3), beta(3), gamma(1), delta(1), epsilon(1). CF(0) has three main subunits: a, b and c.

Its subcellular location is the mitochondrion. It is found in the mitochondrion inner membrane. In terms of biological role, mitochondrial membrane ATP synthase (F(1)F(0) ATP synthase or Complex V) produces ATP from ADP in the presence of a proton gradient across the membrane which is generated by electron transport complexes of the respiratory chain. F-type ATPases consist of two structural domains, F(1) - containing the extramembraneous catalytic core and F(0) - containing the membrane proton channel, linked together by a central stalk and a peripheral stalk. During catalysis, ATP synthesis in the catalytic domain of F(1) is coupled via a rotary mechanism of the central stalk subunits to proton translocation. Part of the complex F(0) domain and the peripheric stalk, which acts as a stator to hold the catalytic alpha(3)beta(3) subcomplex and subunit a/ATP6 static relative to the rotary elements. In Neurospora crassa (strain ATCC 24698 / 74-OR23-1A / CBS 708.71 / DSM 1257 / FGSC 987), this protein is ATP synthase subunit 5, mitochondrial (atp-5).